Here is a 195-residue protein sequence, read N- to C-terminus: Glycerol-3-phosphate acyltransferase 1 (195 aa).

Helical transmembrane passes span 6–26 (VILTGIFMAYAVGSLAGGHFL), 52–72 (LGIAAGIMTFIWDTAKGFLVV), 74–94 (LGLKGGGAELGVLMALAAVAG), 117–137 (LAVYPAAVPPGAALMGLLTFL), and 168–188 (FGLGLAAIMLLRHGPLVISLF).

This sequence belongs to the PlsY family. Probably interacts with PlsX.

The protein localises to the cell membrane. The enzyme catalyses an acyl phosphate + sn-glycerol 3-phosphate = a 1-acyl-sn-glycero-3-phosphate + phosphate. It participates in lipid metabolism; phospholipid metabolism. In terms of biological role, catalyzes the transfer of an acyl group from acyl-phosphate (acyl-PO(4)) to glycerol-3-phosphate (G3P) to form lysophosphatidic acid (LPA). This enzyme utilizes acyl-phosphate as fatty acyl donor, but not acyl-CoA or acyl-ACP. This is Glycerol-3-phosphate acyltransferase 1 from Moorella thermoacetica (strain ATCC 39073 / JCM 9320).